Here is a 320-residue protein sequence, read N- to C-terminus: Polyprenal reductase 1 (320 aa).

A run of 6 helical transmembrane segments spans residues 5–25, 64–84, 143–163, 200–220, 243–263, and 266–286; these read IVWLVKAAWITVWIVSILPLV, FFGHFYVVGVVWTTLLLAATW, MHILAYVGALFYYVAAPLSLC, PLMKLGSLQWIGGAIFLWGWI, IIPYGDWFEMVSCPHFLAEIV, and LGLLISSGGTDISIWLLFGFV.

Belongs to the steroid 5-alpha reductase family. Polyprenal reductase subfamily. In terms of tissue distribution, expressed in roots and flowers.

It localises to the cell membrane. It catalyses the reaction a di-trans,poly-cis-dolichal + NADP(+) = a di-trans,poly-cis-polyprenal + NADPH + H(+). The protein operates within protein modification; protein glycosylation. Its function is as follows. Plays a key role in early steps of protein N-linked glycosylation by being involved in the conversion of polyprenol into dolichol. Acts as a polyprenal reductase that mediates the reduction of polyprenal into dolichal in a NADP-dependent mechanism. Dolichols are required for the synthesis of dolichol-linked monosaccharides and the oligosaccharide precursor used for N-glycosylation. Involved in the regulation of plant growth and reproductive processes. This is Polyprenal reductase 1 from Arabidopsis thaliana (Mouse-ear cress).